Here is a 641-residue protein sequence, read N- to C-terminus: 1-deoxy-D-xylulose-5-phosphate synthase (641 aa).

Residues His71 and 112–114 (SHA) each bind thiamine diphosphate. Residue Asp144 coordinates Mg(2+). Thiamine diphosphate contacts are provided by residues 145-146 (GA), Asn173, Tyr284, and Glu365. Asn173 is a Mg(2+) binding site.

The protein belongs to the transketolase family. DXPS subfamily. In terms of assembly, homodimer. Requires Mg(2+) as cofactor. Thiamine diphosphate serves as cofactor.

The catalysed reaction is D-glyceraldehyde 3-phosphate + pyruvate + H(+) = 1-deoxy-D-xylulose 5-phosphate + CO2. It participates in metabolic intermediate biosynthesis; 1-deoxy-D-xylulose 5-phosphate biosynthesis; 1-deoxy-D-xylulose 5-phosphate from D-glyceraldehyde 3-phosphate and pyruvate: step 1/1. Its function is as follows. Catalyzes the acyloin condensation reaction between C atoms 2 and 3 of pyruvate and glyceraldehyde 3-phosphate to yield 1-deoxy-D-xylulose-5-phosphate (DXP). This Mycobacterium avium (strain 104) protein is 1-deoxy-D-xylulose-5-phosphate synthase.